A 61-amino-acid chain; its full sequence is Small ribosomal subunit protein uS14 (61 aa).

Cys-24, Cys-27, Cys-40, and Cys-43 together coordinate Zn(2+).

It belongs to the universal ribosomal protein uS14 family. Zinc-binding uS14 subfamily. In terms of assembly, part of the 30S ribosomal subunit. Contacts proteins S3 and S10. It depends on Zn(2+) as a cofactor.

Binds 16S rRNA, required for the assembly of 30S particles and may also be responsible for determining the conformation of the 16S rRNA at the A site. The chain is Small ribosomal subunit protein uS14 from Nitratidesulfovibrio vulgaris (strain DSM 19637 / Miyazaki F) (Desulfovibrio vulgaris).